A 317-amino-acid polypeptide reads, in one-letter code: Metaxin-1 (317 aa).

Glycyl lysine isopeptide (Lys-Gly) (interchain with G-Cter in ubiquitin) cross-links involve residues K38, K41, and K78. A helical membrane pass occupies residues 164 to 184 (EELEKELYREARECLTLLSQR).

It belongs to the metaxin family. As to quaternary structure, interacts with MTX2/metaxin-2. Associates with the mitochondrial contact site and cristae organizing system (MICOS) complex, composed of at least MICOS10/MIC10, CHCHD3/MIC19, CHCHD6/MIC25, APOOL/MIC27, IMMT/MIC60, APOO/MIC23/MIC26 and QIL1/MIC13. This complex was also known under the names MINOS or MitOS complex. The MICOS complex associates with mitochondrial outer membrane proteins SAMM50, MTX1 and MTX2 (together described as components of the mitochondrial outer membrane sorting assembly machinery (SAM) complex) and DNAJC11, mitochondrial inner membrane protein TMEM11 and with HSPA9. The MICOS and SAM complexes together with DNAJC11 are part of a large protein complex spanning both membranes termed the mitochondrial intermembrane space bridging (MIB) complex. Interacts with ARMC1. Ubiquitinated by PRKN during mitophagy, leading to its degradation and enhancement of mitophagy. Deubiquitinated by USP30.

It localises to the mitochondrion outer membrane. Involved in transport of proteins into the mitochondrion. Essential for embryonic development. This chain is Metaxin-1 (MTX1), found in Macaca fascicularis (Crab-eating macaque).